A 268-amino-acid polypeptide reads, in one-letter code: F-actin-capping protein subunit alpha (268 aa).

The residue at position 2 (serine 2) is an N-acetylserine. The residue at position 17 (serine 17) is a Phosphoserine.

Belongs to the F-actin-capping protein alpha subunit family. In terms of assembly, component of the F-actin capping complex, composed of a heterodimer of an alpha and a beta subunit. Interacts with BSP1 (via C-terminus); leading to recruitment of the F-actin capping complex to actin cortical patches and the acomyosin contractile ring.

The protein resides in the cytoplasm. It is found in the cytoskeleton. The protein localises to the actin patch. In terms of biological role, F-actin-capping proteins bind in a Ca(2+)-independent manner to the fast growing ends of actin filaments (barbed end) thereby blocking the exchange of subunits at these ends. Unlike other capping proteins (such as gelsolin and severin), these proteins do not sever actin filaments. In Saccharomyces cerevisiae (strain ATCC 204508 / S288c) (Baker's yeast), this protein is F-actin-capping protein subunit alpha (CAP1).